Reading from the N-terminus, the 434-residue chain is Protein trichome birefringence-like 3 (434 aa).

A helical; Signal-anchor for type II membrane protein membrane pass occupies residues 15–35; it reads IPLSIIVLVLCGFMFFILLYT. The GDS motif motif lies at 166–168; it reads GDS. A DCXHWCLPGXXDXWN motif motif is present at residues 413–427; sequence DCIHWCLPGLPDTWN.

Belongs to the PC-esterase family. TBL subfamily.

The protein localises to the golgi apparatus membrane. Its function is as follows. Involved in secondary cell wall cellulose deposition. Required for normal stem development. May act as a bridging protein that binds pectin and other cell wall polysaccharides. Probably involved in maintaining esterification of pectins. May be involved in the specific O-acetylation of cell wall polymers. The chain is Protein trichome birefringence-like 3 (TBL3) from Arabidopsis thaliana (Mouse-ear cress).